A 147-amino-acid chain; its full sequence is DNA polymerase III subunit chi (147 aa).

The protein belongs to the DNA polymerase III chi/HolC chain family. In terms of assembly, the DNA polymerase III holoenzyme complex contains at least 10 different subunits organized into 3 functionally essential subassemblies: the Pol III core, the beta sliding clamp processivity factor and the clamp-loading complex. The Pol III core (subunits alpha, epsilon and theta) contains the polymerase and the 3'-5' exonuclease proofreading activities. The polymerase is tethered to the template via the dimeric beta sliding clamp processivity factor. The clamp-loading complex (also called gamma complex) assembles the beta sliding clamp onto the primed template and plays a central role in the organization and communication at the replication fork. The clamp-loading complex contains delta, delta', psi and chi, and 3 copies of either or both of two different DnaX proteins, gamma and tau. The DNA replisome complex has a single clamp loader (3 tau and 1 each of delta, delta', psi and chi subunits) which binds 3 Pol III cores (1 core on the leading strand and 2 on the lagging strand) each with a beta sliding clamp dimer. Additional proteins in the replisome are other copies of gamma, psi (holD) and chi (this protein), SSB, DNA helicase and RNA primase. The clamp loader hydrolyzes ATP to assemble the beta processivity factor onto the primed template and plays a central role in the organization and communication at the replication fork. The only subunit of the DNA polymerase III holoenzyme known to interact with single-stranded DNA binding protein (SSB). Interacts directly with the psi subunit (holD). Interacts directly with DNA helicase YoaA. It binds to HolD and YoaA, but not both simultaneously.

It carries out the reaction DNA(n) + a 2'-deoxyribonucleoside 5'-triphosphate = DNA(n+1) + diphosphate. Functionally, part of the beta sliding clamp loading complex, which hydrolyzes ATP to load the beta clamp onto primed DNA to form the DNA replication pre-initiation complex. DNA polymerase III is a complex, multichain enzyme responsible for most of the replicative synthesis in bacteria. This DNA polymerase also exhibits 3' to 5' exonuclease activity. Genetically identified as involved in the repair of replication forks and tolerance of the chain-terminating nucleoside analog 3' AZT. This subunit may stabilize YoaA and/or stimulate the helicase activity of YoaA. This is DNA polymerase III subunit chi from Escherichia coli (strain K12).